Here is a 182-residue protein sequence, read N- to C-terminus: T-cell surface glycoprotein CD3 gamma chain (182 aa).

The N-terminal stretch at 1 to 22 (MEQGKHLAGLILAITLLQGTMA) is a signal peptide. The Ig-like domain occupies 23-98 (QLKEGKHSVL…GSKENSKRLQ (76 aa)). The Extracellular portion of the chain corresponds to 23–116 (QLKEGKHSVL…CIELNSATVS (94 aa)). The cysteines at positions 46 and 87 are disulfide-linked. Asparagine 66 carries an N-linked (GlcNAc...) asparagine glycan. A helical transmembrane segment spans residues 117–137 (GFIFTEIISLFFLAVGVYFIA). Residues 138–182 (GQDGVRQSRASDKQTLLSNDQLYQPLKDREDDQYSHLQGNNSRKN) lie on the Cytoplasmic side of the membrane. Phosphoserine is present on serine 145. The residue at position 148 (serine 148) is a Phosphoserine; by PKC. In terms of domain architecture, ITAM spans 149-177 (DKQTLLSNDQLYQPLKDREDDQYSHLQGN). The short motif at 153–154 (LL) is the Di-leucine motif element.

As to quaternary structure, the TCR-CD3 complex is composed of a CD3D/CD3E and a CD3G/CD3E heterodimers that preferentially associate with TCRalpha and TCRbeta, respectively, to form TCRalpha/CD3E/CD3G and TCRbeta/CD3G/CD3E trimers. In turn, the hexamer interacts with CD3Z homodimer to form the TCR-CD3 complex. Alternatively, TCRalpha and TCRbeta can be replaced by TCRgamma and TCRdelta. Post-translationally, phosphorylated on Tyr residues after T-cell receptor triggering by LCK in association with CD4/CD8. Phosphorylated also by PKC; leading to the TCR complex down-regulation. Phosphorylated on Tyr residues after T-cell receptor triggering by LCK in association with CD4/CD8.

The protein resides in the cell membrane. In terms of biological role, part of the TCR-CD3 complex present on T-lymphocyte cell surface that plays an essential role in adaptive immune response. When antigen presenting cells (APCs) activate T-cell receptor (TCR), TCR-mediated signals are transmitted across the cell membrane by the CD3 chains CD3D, CD3E, CD3G and CD3Z. All CD3 chains contain immunoreceptor tyrosine-based activation motifs (ITAMs) in their cytoplasmic domain. Upon TCR engagement, these motifs become phosphorylated by Src family protein tyrosine kinases LCK and FYN, resulting in the activation of downstream signaling pathways. In addition to this role of signal transduction in T-cell activation, CD3G plays an essential role in the dynamic regulation of TCR expression at the cell surface. Indeed, constitutive TCR cycling is dependent on the di-leucine-based (diL) receptor-sorting motif present in CD3G. This chain is T-cell surface glycoprotein CD3 gamma chain (CD3G), found in Sus scrofa (Pig).